The sequence spans 72 residues: Translation initiation factor IF-1 (72 aa).

An S1-like domain is found at 1 to 72; sequence MSKEDVIEVE…TRGRITWRAK (72 aa).

This sequence belongs to the IF-1 family. As to quaternary structure, component of the 30S ribosomal translation pre-initiation complex which assembles on the 30S ribosome in the order IF-2 and IF-3, IF-1 and N-formylmethionyl-tRNA(fMet); mRNA recruitment can occur at any time during PIC assembly.

The protein resides in the cytoplasm. In terms of biological role, one of the essential components for the initiation of protein synthesis. Stabilizes the binding of IF-2 and IF-3 on the 30S subunit to which N-formylmethionyl-tRNA(fMet) subsequently binds. Helps modulate mRNA selection, yielding the 30S pre-initiation complex (PIC). Upon addition of the 50S ribosomal subunit IF-1, IF-2 and IF-3 are released leaving the mature 70S translation initiation complex. This chain is Translation initiation factor IF-1, found in Acetivibrio thermocellus (strain ATCC 27405 / DSM 1237 / JCM 9322 / NBRC 103400 / NCIMB 10682 / NRRL B-4536 / VPI 7372) (Clostridium thermocellum).